The sequence spans 280 residues: Shikimate dehydrogenase (NADP(+)) (280 aa).

Shikimate contacts are provided by residues 20 to 22 and threonine 67; that span reads SLS. The active-site Proton acceptor is lysine 71. The shikimate site is built by asparagine 92 and aspartate 107. NADP(+) is bound by residues 131-135 and glycine 220; that span reads GAGGA. Tyrosine 222 lines the shikimate pocket. Position 243 (glycine 243) interacts with NADP(+).

It belongs to the shikimate dehydrogenase family. In terms of assembly, homodimer.

It carries out the reaction shikimate + NADP(+) = 3-dehydroshikimate + NADPH + H(+). Its pathway is metabolic intermediate biosynthesis; chorismate biosynthesis; chorismate from D-erythrose 4-phosphate and phosphoenolpyruvate: step 4/7. In terms of biological role, involved in the biosynthesis of the chorismate, which leads to the biosynthesis of aromatic amino acids. Catalyzes the reversible NADPH linked reduction of 3-dehydroshikimate (DHSA) to yield shikimate (SA). The protein is Shikimate dehydrogenase (NADP(+)) of Maricaulis maris (strain MCS10) (Caulobacter maris).